The chain runs to 424 residues: Glycerol-3-phosphate dehydrogenase [NAD(+)] (424 aa).

NAD(+) is bound by residues 79–84 (GSGNWG), phenylalanine 111, and phenylalanine 167. Lysine 190 is a substrate binding site. Alanine 223 is a binding site for NAD(+). Lysine 283 (proton acceptor) is an active-site residue. NAD(+) is bound by residues arginine 348 and glutamine 377. Residue 348–349 (RN) coordinates substrate.

This sequence belongs to the NAD-dependent glycerol-3-phosphate dehydrogenase family.

It carries out the reaction sn-glycerol 3-phosphate + NAD(+) = dihydroxyacetone phosphate + NADH + H(+). In Eremothecium gossypii (strain ATCC 10895 / CBS 109.51 / FGSC 9923 / NRRL Y-1056) (Yeast), this protein is Glycerol-3-phosphate dehydrogenase [NAD(+)] (GPD).